We begin with the raw amino-acid sequence, 299 residues long: ATP phosphoribosyltransferase (299 aa).

The protein belongs to the ATP phosphoribosyltransferase family. Long subfamily. In terms of assembly, equilibrium between an active dimeric form, an inactive hexameric form and higher aggregates. Interconversion between the various forms is largely reversible and is influenced by the natural substrates and inhibitors of the enzyme. It depends on Mg(2+) as a cofactor.

It is found in the cytoplasm. The catalysed reaction is 1-(5-phospho-beta-D-ribosyl)-ATP + diphosphate = 5-phospho-alpha-D-ribose 1-diphosphate + ATP. The protein operates within amino-acid biosynthesis; L-histidine biosynthesis; L-histidine from 5-phospho-alpha-D-ribose 1-diphosphate: step 1/9. With respect to regulation, feedback inhibited by histidine. Functionally, catalyzes the condensation of ATP and 5-phosphoribose 1-diphosphate to form N'-(5'-phosphoribosyl)-ATP (PR-ATP). Has a crucial role in the pathway because the rate of histidine biosynthesis seems to be controlled primarily by regulation of HisG enzymatic activity. The sequence is that of ATP phosphoribosyltransferase from Shigella dysenteriae serotype 1 (strain Sd197).